A 1975-amino-acid chain; its full sequence is Cadherin-87A (1975 aa).

Positions 1 to 17 (MKLPLGLLMICLGLTLA) are cleaved as a signal peptide. At 18–1775 (KGETNLPPVF…AIVQDEFDLA (1758 aa)) the chain is on the extracellular side. Cadherin domains are found at residues 28–132 (TQTL…PPEF), 133–245 (QNTP…PPVF), 246–358 (QGSL…PPVF), 359–472 (NHKE…KPVF), 473–669 (EQES…PPVC), 670–774 (ESPL…VPNF), 775–878 (EQQS…DPYF), 879–998 (VPAT…PPRF), 999–1103 (NAPW…DPKF), 1104–1211 (SQSD…APVF), 1212–1318 (TRDV…KPEF), 1319–1431 (VIPA…RPEF), 1432–1553 (PDAS…PPVF), and 1554–1677 (EKPI…PPEE). Residues asparagine 39, asparagine 77, and asparagine 203 are each glycosylated (N-linked (GlcNAc...) asparagine). N-linked (GlcNAc...) asparagine glycosylation is present at asparagine 424. A disordered region spans residues 535 to 560 (CHDNGESNRRERRDLNEDEHVEEDDG). The segment covering 537–549 (DNGESNRRERRDL) has biased composition (basic and acidic residues). The segment covering 550 to 560 (NEDEHVEEDDG) has biased composition (acidic residues). Asparagine 730 and asparagine 761 each carry an N-linked (GlcNAc...) asparagine glycan. Residues asparagine 1039, asparagine 1049, asparagine 1111, asparagine 1163, asparagine 1217, asparagine 1325, asparagine 1349, asparagine 1492, asparagine 1576, and asparagine 1691 are each glycosylated (N-linked (GlcNAc...) asparagine). The chain crosses the membrane as a helical span at residues 1776–1796 (VAGLVALVIVLFVGVISFIVL). The Cytoplasmic segment spans residues 1797-1975 (CCCLKHWNLS…DGDDAVAELI (179 aa)). The span at 1887–1899 (YATIQPRNNQNRL) shows a compositional bias: polar residues. The segment at 1887 to 1916 (YATIQPRNNQNRLTGGGGAGGGSMRSGGGA) is disordered. Gly residues predominate over residues 1900–1916 (TGGGGAGGGSMRSGGGA).

The protein localises to the cell membrane. Functionally, cadherins are calcium-dependent cell adhesion proteins. They preferentially interact with themselves in a homophilic manner in connecting cells. The protein is Cadherin-87A (Cad87A) of Drosophila melanogaster (Fruit fly).